Reading from the N-terminus, the 467-residue chain is Glutamate--tRNA ligase (467 aa).

The 'HIGH' region signature appears at 9–19 (PSPTGYLHIGG). Residues 237-241 (KLSKR) carry the 'KMSKS' region motif. Lysine 240 is an ATP binding site.

The protein belongs to the class-I aminoacyl-tRNA synthetase family. Glutamate--tRNA ligase type 1 subfamily. In terms of assembly, monomer.

Its subcellular location is the cytoplasm. It carries out the reaction tRNA(Glu) + L-glutamate + ATP = L-glutamyl-tRNA(Glu) + AMP + diphosphate. Catalyzes the attachment of glutamate to tRNA(Glu) in a two-step reaction: glutamate is first activated by ATP to form Glu-AMP and then transferred to the acceptor end of tRNA(Glu). The sequence is that of Glutamate--tRNA ligase from Xylella fastidiosa (strain 9a5c).